The chain runs to 139 residues: ATP synthase epsilon chain (139 aa).

This sequence belongs to the ATPase epsilon chain family. In terms of assembly, F-type ATPases have 2 components, CF(1) - the catalytic core - and CF(0) - the membrane proton channel. CF(1) has five subunits: alpha(3), beta(3), gamma(1), delta(1), epsilon(1). CF(0) has three main subunits: a, b and c.

It is found in the cell inner membrane. Produces ATP from ADP in the presence of a proton gradient across the membrane. This is ATP synthase epsilon chain from Pectobacterium carotovorum subsp. carotovorum (strain PC1).